A 70-amino-acid polypeptide reads, in one-letter code: MKQGIHPEYKEVTATCSCGNVIKTRSTLGKDINLDVCGNCHPFYTGKQRVVDTGGRVERFNSRFKIPSTK.

Zn(2+)-binding residues include Cys16, Cys18, Cys37, and Cys40.

The protein belongs to the bacterial ribosomal protein bL31 family. Type A subfamily. In terms of assembly, part of the 50S ribosomal subunit. The cofactor is Zn(2+).

Its function is as follows. Binds the 23S rRNA. The protein is Large ribosomal subunit protein bL31 of Haemophilus influenzae (strain 86-028NP).